Consider the following 215-residue polypeptide: Cytidylate kinase (215 aa).

ATP is bound at residue 10-18 (GPAAAGKST).

This sequence belongs to the cytidylate kinase family. Type 1 subfamily.

Its subcellular location is the cytoplasm. The catalysed reaction is CMP + ATP = CDP + ADP. The enzyme catalyses dCMP + ATP = dCDP + ADP. This is Cytidylate kinase from Staphylococcus epidermidis (strain ATCC 35984 / DSM 28319 / BCRC 17069 / CCUG 31568 / BM 3577 / RP62A).